The chain runs to 180 residues: 2-oxoglutarate dehydrogenase, mitochondrial (180 aa).

An N6-succinyllysine modification is found at lysine 14. Position 40 is a phosphoserine (serine 40). Arginine 64 contacts thiamine diphosphate.

Belongs to the alpha-ketoglutarate dehydrogenase family. As to quaternary structure, homodimer. The 2-oxoglutarate dehydrogenase complex is composed of OGDH (2-oxoglutarate dehydrogenase; E1), DLST (dihydrolipoamide succinyltransferase; E2) and DLD (dihydrolipoamide dehydrogenase; E3). It contains multiple copies of the three enzymatic components (E1, E2 and E3). In the nucleus, the 2-oxoglutarate dehydrogenase complex associates with KAT2A. Interacts with ABHD11; this interaction maintains the functional lipoylation of the 2-oxoglutarate dehydrogenase complex. Thiamine diphosphate serves as cofactor. The cofactor is Mg(2+).

It is found in the mitochondrion matrix. It localises to the nucleus. The enzyme catalyses N(6)-[(R)-lipoyl]-L-lysyl-[protein] + 2-oxoglutarate + H(+) = N(6)-[(R)-S(8)-succinyldihydrolipoyl]-L-lysyl-[protein] + CO2. With respect to regulation, calcium ions and ADP stimulate, whereas ATP and NADH reduce catalytic activity. 2-oxoglutarate dehydrogenase (E1) component of the 2-oxoglutarate dehydrogenase complex (OGDHC), which mediates the decarboxylation of alpha-ketoglutarate. The 2-oxoglutarate dehydrogenase complex catalyzes the overall conversion of 2-oxoglutarate to succinyl-CoA and CO(2). The 2-oxoglutarate dehydrogenase complex is mainly active in the mitochondrion. A fraction of the 2-oxoglutarate dehydrogenase complex also localizes in the nucleus and is required for lysine succinylation of histones: associates with KAT2A on chromatin and provides succinyl-CoA to histone succinyltransferase KAT2A. The polypeptide is 2-oxoglutarate dehydrogenase, mitochondrial (Mesocricetus auratus (Golden hamster)).